The primary structure comprises 145 residues: Superoxide dismutase [Mn/Fe] (145 aa).

Fe(3+) is bound by residues H10 and H64. Mn(2+) contacts are provided by H10 and H64.

The protein belongs to the iron/manganese superoxide dismutase family. Requires Mn(2+) as cofactor. Fe(3+) serves as cofactor.

It catalyses the reaction 2 superoxide + 2 H(+) = H2O2 + O2. Functionally, destroys superoxide anion radicals which are normally produced within the cells and which are toxic to biological systems. Catalyzes the dismutation of superoxide anion radicals into O2 and H2O2 by successive reduction and oxidation of the transition metal ion at the active site. In Streptococcus acidominimus, this protein is Superoxide dismutase [Mn/Fe] (sodA).